Reading from the N-terminus, the 236-residue chain is Bidirectional sugar transporter SWEET2 (236 aa).

At 1-15 the chain is on the extracellular side; it reads MDVFAFNASLSMCKD. Asparagine 7 carries N-linked (GlcNAc...) asparagine glycosylation. Residues 16–36 traverse the membrane as a helical segment; that stretch reads VAGIAGNIFAFGLFVSPMPTF. Residues 18–103 form the MtN3/slv 1 domain; that stretch reads GIAGNIFAFG…ILFIMHTDKK (86 aa). The Cytoplasmic portion of the chain corresponds to 37-50; the sequence is RRIMRNKSTEQFSG. The chain crosses the membrane as a helical span at residues 51–71; it reads LPYIYALLNCLICLWYGTPFI. Topologically, residues 72-76 are extracellular; the sequence is SHSNA. The helical transmembrane segment at 77-97 threads the bilayer; the sequence is MLMTVNSVGATFQLCYIILFI. At 98 to 108 the chain is on the cytoplasmic side; it reads MHTDKKNKMKM. The chain crosses the membrane as a helical span at residues 109 to 129; sequence LGLLFVVFAVVGVIVAGSLQI. At 130–137 the chain is on the extracellular side; the sequence is PDQLTRWY. Residues 138-158 form a helical membrane-spanning segment; sequence FVGFLSCGSLVSMFASPLFVI. Positions 138–221 constitute a MtN3/slv 2 domain; the sequence is FVGFLSCGSL…LALYCYYHRN (84 aa). The Cytoplasmic portion of the chain corresponds to 159-170; it reads NLVIRTKSVEFM. The chain crosses the membrane as a helical span at residues 171–191; sequence PFYLSLSTFLMSASFLLYGLF. The Extracellular segment spans residues 192–194; the sequence is NSD. Residues 195–215 form a helical membrane-spanning segment; it reads AFVYTPNGIGTILGIVQLALY. Residues 216 to 236 are Cytoplasmic-facing; the sequence is CYYHRNSIEEETKEPLIVSYV.

The protein belongs to the SWEET sugar transporter family. Forms heterooligomers with SWEET17.

The protein localises to the cell membrane. Mediates both low-affinity uptake and efflux of sugar across the plasma membrane. This is Bidirectional sugar transporter SWEET2 from Arabidopsis thaliana (Mouse-ear cress).